A 675-amino-acid polypeptide reads, in one-letter code: Zeaxanthin epoxidase, chloroplastic (675 aa).

A chloroplast-targeting transit peptide spans 1–25 (MASTVLYNSLTTSTTVFLRSHLPIS). Residues 92-120 (RILV…KVFE) and 370-383 (KLTW…LLGD) each bind FAD. The FHA domain occupies 558–622 (ICLSRKEDEP…HGTWITDNEG (65 aa)).

The cofactor is FAD.

Its subcellular location is the plastid. The protein localises to the chloroplast thylakoid membrane. The catalysed reaction is all-trans-zeaxanthin + 4 reduced [2Fe-2S]-[ferredoxin] + 2 O2 + 4 H(+) = all-trans-violaxanthin + 4 oxidized [2Fe-2S]-[ferredoxin] + 2 H2O. Its pathway is plant hormone biosynthesis; abscisate biosynthesis. With respect to regulation, inhibited by diphenyleneiodonium (DPI). In terms of biological role, converts zeaxanthin into antheraxanthin and subsequently violaxanthin. Involved in the epoxidation of zeaxanthin. This chain is Zeaxanthin epoxidase, chloroplastic, found in Spinacia oleracea (Spinach).